Here is a 295-residue protein sequence, read N- to C-terminus: Acetyl-coenzyme A carboxylase carboxyl transferase subunit beta (295 aa).

The tract at residues 1–20 is disordered; it reads MSWLSKLMPSGIRTENTPAK. Residues 28 to 295 form the CoA carboxyltransferase N-terminal domain; that stretch reads LWEKCSNCGS…QPHPQDADAA (268 aa). 4 residues coordinate Zn(2+): Cys-32, Cys-35, Cys-51, and Cys-54. The C4-type zinc finger occupies 32-54; sequence CSNCGSALYGPELEENLEVCPKC.

This sequence belongs to the AccD/PCCB family. In terms of assembly, acetyl-CoA carboxylase is a heterohexamer composed of biotin carboxyl carrier protein (AccB), biotin carboxylase (AccC) and two subunits each of ACCase subunit alpha (AccA) and ACCase subunit beta (AccD). Zn(2+) serves as cofactor.

The protein resides in the cytoplasm. The catalysed reaction is N(6)-carboxybiotinyl-L-lysyl-[protein] + acetyl-CoA = N(6)-biotinyl-L-lysyl-[protein] + malonyl-CoA. Its pathway is lipid metabolism; malonyl-CoA biosynthesis; malonyl-CoA from acetyl-CoA: step 1/1. Its function is as follows. Component of the acetyl coenzyme A carboxylase (ACC) complex. Biotin carboxylase (BC) catalyzes the carboxylation of biotin on its carrier protein (BCCP) and then the CO(2) group is transferred by the transcarboxylase to acetyl-CoA to form malonyl-CoA. The protein is Acetyl-coenzyme A carboxylase carboxyl transferase subunit beta of Xanthomonas campestris pv. campestris (strain B100).